Here is a 434-residue protein sequence, read N- to C-terminus: Iron transporter MagA (434 aa).

10 helical membrane-spanning segments follow: residues P6–T26, P31–V51, A56–L76, K86–L106, S113–I133, L176–W196, S269–W289, T294–L314, W321–L341, and K357–M377.

It belongs to the monovalent cation:proton antiporter 2 (CPA2) transporter (TC 2.A.37) family.

It is found in the membrane. In terms of biological role, iron transporter, which is required for the synthesis of bacterial magnetic particles (BMPs). Probably involved in the transport of iron from the environment into the cytoplasm across the cell membrane, and then from the cytoplasm into the BMP lipid vesicle across the BMP membrane. The chain is Iron transporter MagA (magA) from Paramagnetospirillum magneticum (strain ATCC 700264 / AMB-1) (Magnetospirillum magneticum).